A 277-amino-acid chain; its full sequence is tRNA pseudouridine synthase A (277 aa).

The active-site Nucleophile is the Asp57. Residue Tyr115 coordinates substrate.

It belongs to the tRNA pseudouridine synthase TruA family. In terms of assembly, homodimer.

The enzyme catalyses uridine(38/39/40) in tRNA = pseudouridine(38/39/40) in tRNA. Its function is as follows. Formation of pseudouridine at positions 38, 39 and 40 in the anticodon stem and loop of transfer RNAs. This chain is tRNA pseudouridine synthase A, found in Nitratidesulfovibrio vulgaris (strain DSM 19637 / Miyazaki F) (Desulfovibrio vulgaris).